The primary structure comprises 1548 residues: Dual oxidase 2 (1548 aa).

The signal sequence occupies residues 1–25 (MLRARPEALMLLGALLTGSLGPSGN). At 26–601 (QDALSLPWEV…EGSSPGFAIT (576 aa)) the chain is on the extracellular side. Residues 30 to 596 (SLPWEVQRYD…VLDFFEGSSP (567 aa)) are peroxidase-like; mediates peroxidase activity. N-linked (GlcNAc...) asparagine glycans are attached at residues Asn-100, Asn-348, Asn-382, Asn-455, and Asn-537. Cys-124 and Cys-1162 are joined by a disulfide. The helical transmembrane segment at 602–622 (IIALCCLPLVSLLLSGVVAYF) threads the bilayer. At 623 to 1041 (RGREHKKLQK…KRFVENYRRH (419 aa)) the chain is on the cytoplasmic side. EF-hand domains follow at residues 819–854 (PQDMFVESMFSLADKDGNGYLSFREFLDILVVFMKG), 855–890 (SPEDKSRLMFTMYDLDENGFLSKDEFFTMMRSFIEI), and 899–934 (QLAEVVESMFRESGFQDKEELTWEDFHFMLRDHDSE). 9 residues coordinate Ca(2+): Asp-832, Asp-834, Asn-836, Tyr-838, Glu-843, Asp-868, Asp-870, Asn-872, and Glu-879. The interaction with TXNDC11 stretch occupies residues 960–1245 (ISCRVSFITR…GSYALIQLPT (286 aa)). Residues 971–991 (PGERSHPQGLGPPAPEAPELG) are disordered. A helical membrane pass occupies residues 1042–1062 (IVCVAIFSAICVGVFADRAYY). Residues 1063 to 1076 (YGFASPPSDIAQTT) are Extracellular-facing. A helical transmembrane segment spans residues 1077 to 1097 (LVGIILSRGTAASVSFMFSYI). The Ferric oxidoreductase domain occupies 1084-1266 (RGTAASVSFM…YGGDKLVSLS (183 aa)). Over 1098–1128 (LLTMCRNLITFLRETFLNRYVPFDAAVDFHR) the chain is Cytoplasmic. The helical transmembrane segment at 1129–1151 (WIAMAAVVLAILHSAGHAVNVYI) threads the bilayer. Topologically, residues 1152 to 1185 (FSVSPLSLLACIFPNVFVNDGSKLPQKFYWWFFQ) are extracellular. A helical membrane pass occupies residues 1186–1206 (TVPGMTGVLLLLVLAIMYVFA). At 1207–1223 (SHHFRRRSFRGFWLTHH) the chain is on the cytoplasmic side. 2 helical membrane passes run 1224–1244 (LYILLYALLIIHGSYALIQLP) and 1245–1265 (TFHIYFLVPAIIYGGDKLVSL). Over 1266–1548 (SRKKVEISVV…AHFMHHYENF (283 aa)) the chain is Cytoplasmic. The FAD-binding FR-type domain maps to 1267–1373 (RKKVEISVVK…DGPFGEGHQE (107 aa)).

In the N-terminal section; belongs to the peroxidase family. As to quaternary structure, heterodimer with DUOXA2; disulfide-linked. Interacts with TXNDC11, TPO and CYBA. In terms of processing, N-glycosylated. As to expression, expressed in colon, small intestine, duodenum and tracheal surface epithelial cells (at protein level). Expressed in thyrocytes. Also detected in kidney, liver, lung, pancreas, prostate, salivary glands, rectum and testis.

It localises to the apical cell membrane. It is found in the cell junction. It carries out the reaction NADH + O2 + H(+) = H2O2 + NAD(+). The catalysed reaction is NADPH + O2 + H(+) = H2O2 + NADP(+). It functions in the pathway hormone biosynthesis; thyroid hormone biosynthesis. Its activity is regulated as follows. Peroxidase activity is inhibited by aminobenzohydrazide. The NADPH oxidase activity is calcium-dependent. Functionally, generates hydrogen peroxide which is required for the activity of thyroid peroxidase/TPO and lactoperoxidase/LPO. Plays a role in thyroid hormones synthesis and lactoperoxidase-mediated antimicrobial defense at the surface of mucosa. May have its own peroxidase activity through its N-terminal peroxidase-like domain. The sequence is that of Dual oxidase 2 (DUOX2) from Homo sapiens (Human).